Here is a 288-residue protein sequence, read N- to C-terminus: MSTDLDRPRLGSLFTRGHELPTAPARGEITLRARGLVVERRGGSGPARRVLDQVDFAVAAGEIVALVGPNGAGKSTLLAALAGELTPAAGGVELDGHPLTHWSPLDMARRRAVLPQTHTVGFPFTAREVVAMGRAPWVRTPRADHDDDLIAAAMAAADVTHLAGRAFPTLSGGECARVALARVLAQDTPTLLLDEPTAALDLGHQEAVLRLAADRARDGAAVVVVLHDLGIAAAYADRVAVLDSGRVAADGPPRAVLTTDLLTRVYQHPVEVLDHPVTGAQLVLPVRN.

The ABC transporter domain occupies 31 to 269 (LRARGLVVER…DLLTRVYQHP (239 aa)). An ATP-binding site is contributed by 68–75 (GPNGAGKS).

Belongs to the ABC transporter superfamily. Heme (hemin) importer (TC 3.A.1.14.5) family. The complex is composed of two ATP-binding proteins (HmuV), two transmembrane proteins (HmuU) and a solute-binding protein (HmuT).

It is found in the cell membrane. Part of the ABC transporter complex HmuTUV involved in hemin import. Responsible for energy coupling to the transport system. This chain is Hemin import ATP-binding protein HmuV, found in Nocardia farcinica (strain IFM 10152).